We begin with the raw amino-acid sequence, 512 residues long: 2-isopropylmalate synthase (512 aa).

The Pyruvate carboxyltransferase domain maps to 5-268 (LIIFDTTLRD…ELGIDTQHIV (264 aa)). 4 residues coordinate Mn(2+): Asp14, His202, His204, and Asn239. The tract at residues 394–512 (GFVSLSQRSE…SKAERVAAQG (119 aa)) is regulatory domain.

It belongs to the alpha-IPM synthase/homocitrate synthase family. LeuA type 1 subfamily. As to quaternary structure, homodimer. Requires Mn(2+) as cofactor.

The protein localises to the cytoplasm. The catalysed reaction is 3-methyl-2-oxobutanoate + acetyl-CoA + H2O = (2S)-2-isopropylmalate + CoA + H(+). Its pathway is amino-acid biosynthesis; L-leucine biosynthesis; L-leucine from 3-methyl-2-oxobutanoate: step 1/4. In terms of biological role, catalyzes the condensation of the acetyl group of acetyl-CoA with 3-methyl-2-oxobutanoate (2-ketoisovalerate) to form 3-carboxy-3-hydroxy-4-methylpentanoate (2-isopropylmalate). This is 2-isopropylmalate synthase from Paracidovorax citrulli (strain AAC00-1) (Acidovorax citrulli).